A 613-amino-acid chain; its full sequence is Methionine--tRNA ligase (613 aa).

A 'HIGH' region motif is present at residues 15–25 (PYANGPRHIGH). Positions 147, 150, 160, and 163 each coordinate Zn(2+). The short motif at 351-355 (KFSSS) is the 'KMSKS' region element. ATP is bound at residue S354.

The protein belongs to the class-I aminoacyl-tRNA synthetase family. MetG type 1 subfamily. As to quaternary structure, monomer. Zn(2+) is required as a cofactor.

It localises to the cytoplasm. The enzyme catalyses tRNA(Met) + L-methionine + ATP = L-methionyl-tRNA(Met) + AMP + diphosphate. Is required not only for elongation of protein synthesis but also for the initiation of all mRNA translation through initiator tRNA(fMet) aminoacylation. This chain is Methionine--tRNA ligase, found in Corynebacterium efficiens (strain DSM 44549 / YS-314 / AJ 12310 / JCM 11189 / NBRC 100395).